Reading from the N-terminus, the 222-residue chain is Charged multivesicular body protein 3 (222 aa).

A lipid anchor (N-myristoyl glycine) is attached at Gly2. Residues 2-113 form an intramolecular interaction with C-terminus region; that stretch reads GLFGKTQEKP…LQKSTEVMKA (112 aa). The stretch at 22–54 forms a coiled coil; sequence KIRKEMRVVDRQIRDIQREEEKVKRSVKDAAKK. Important for autoinhibitory function regions lie at residues 59 to 64 and 168 to 169; these read VCVVLA and IL. A coiled-coil region spans residues 149–222; it reads ESMDDQEEME…MQSRLATLRS (74 aa). Residues 151 to 220 are intramolecular interaction with N-terminus; it reads MDDQEEMEEA…EAMQSRLATL (70 aa). The segment at 151–222 is interaction with VPS4A; it reads MDDQEEMEEA…MQSRLATLRS (72 aa). A Glycyl lysine isopeptide (Lys-Gly) (interchain with G-Cter in ubiquitin) cross-link involves residue Lys179. Residues 180–222 form a disordered region; the sequence is APSKVTDALPEPEPLGAMAASEDEEEEEEALEAMQSRLATLRS. Interaction with STAMBP regions lie at residues 196-222, 203-207, and 221-222; these read AMAA…TLRS, EEEEE, and RS. The residue at position 200 (Ser200) is a Phosphoserine. Residues 200–210 show a composition bias toward acidic residues; sequence SEDEEEEEEAL. The short motif at 201–211 is the MIT-interacting motif element; the sequence is EDEEEEEEALE.

Belongs to the SNF7 family. As to quaternary structure, probable core component of the endosomal sorting required for transport complex III (ESCRT-III). ESCRT-III components are thought to multimerize to form a flat lattice on the perimeter membrane of the endosome. Several assembly forms of ESCRT-III may exist that interact and act sequentially. Forms a metastable monomer in solution; its core structure (without part of the putative autoinhibitory C-terminal acidic region) oligomerizes into a flat lattice via two different dimerization interfaces. In vitro, heteromerizes with CHMP2A (but not CHMP4) to form helical tubular structures that expose membrane-interacting sites on the outside whereas VPS4B can associate on the inside of the tubule. May interact with IGFBP7; the relevance of such interaction however remains unclear. Interacts with CHMP2A. Interacts with CHMP4A; the interaction requires the release of CHMP4A autoinhibition. Interacts with VPS4A. Interacts with STAMBP; the interaction appears to relieve the autoinhibition of CHMP3. Interacts with VTA1.

The protein localises to the cytoplasm. Its subcellular location is the cytosol. The protein resides in the membrane. It localises to the endosome. It is found in the late endosome membrane. Probable core component of the endosomal sorting required for transport complex III (ESCRT-III) which is involved in multivesicular bodies (MVBs) formation and sorting of endosomal cargo proteins into MVBs. MVBs contain intraluminal vesicles (ILVs) that are generated by invagination and scission from the limiting membrane of the endosome and mostly are delivered to lysosomes enabling degradation of membrane proteins, such as stimulated growth factor receptors, lysosomal enzymes and lipids. The MVB pathway appears to require the sequential function of ESCRT-O, -I,-II and -III complexes. ESCRT-III proteins mostly dissociate from the invaginating membrane before the ILV is released. The ESCRT machinery also functions in topologically equivalent membrane fission events, such as the terminal stages of cytokinesis and the budding of enveloped viruses (lentiviruses). ESCRT-III proteins are believed to mediate the necessary vesicle extrusion and/or membrane fission activities, possibly in conjunction with the AAA ATPase VPS4. Selectively binds to phosphatidylinositol 3,5-bisphosphate PtdIns(3,5)P2 and PtdIns(3,4)P2 in preference to other phosphoinositides tested. Involved in late stages of cytokinesis. Plays a role in endosomal sorting/trafficking of EGF receptor. This Bos taurus (Bovine) protein is Charged multivesicular body protein 3 (CHMP3).